The primary structure comprises 1023 residues: Phosphoenolpyruvate carboxylase (1023 aa).

Residues His199 and Lys669 contribute to the active site.

It belongs to the PEPCase type 1 family. Mg(2+) serves as cofactor.

The enzyme catalyses oxaloacetate + phosphate = phosphoenolpyruvate + hydrogencarbonate. Forms oxaloacetate, a four-carbon dicarboxylic acid source for the tricarboxylic acid cycle. This Trichormus variabilis (strain ATCC 29413 / PCC 7937) (Anabaena variabilis) protein is Phosphoenolpyruvate carboxylase.